Reading from the N-terminus, the 315-residue chain is Probable mannose-6-phosphate isomerase GmuF (315 aa).

The Zn(2+) site is built by Gln-95, His-97, Glu-115, and His-172. Arg-192 is an active-site residue.

Belongs to the mannose-6-phosphate isomerase type 1 family. Requires Zn(2+) as cofactor.

The enzyme catalyses D-mannose 6-phosphate = D-fructose 6-phosphate. In terms of biological role, seems to be involved in the degradation of glucomannan. The protein is Probable mannose-6-phosphate isomerase GmuF (gmuF) of Bacillus subtilis (strain 168).